Consider the following 534-residue polypeptide: CTP synthase (534 aa).

Residues 1–265 (MKYIIVTGGV…SNYLLKKLIL (265 aa)) form an amidoligase domain region. Residue Ser12 participates in CTP binding. Ser12 lines the UTP pocket. 13-18 (GLGKGI) is an ATP binding site. Tyr53 lines the L-glutamine pocket. Asp70 lines the ATP pocket. Residues Asp70 and Glu140 each coordinate Mg(2+). Residues 147–149 (DIE), 186–191 (KTKPTQ), and Lys222 each bind CTP. Residues 186 to 191 (KTKPTQ) and Lys222 each bind UTP. A Glutamine amidotransferase type-1 domain is found at 289-530 (NVAIVGKYTH…MGAMLKKSKE (242 aa)). Residue Gly352 participates in L-glutamine binding. Catalysis depends on Cys379, which acts as the Nucleophile; for glutamine hydrolysis. L-glutamine contacts are provided by residues 380–383 (LGMQ), Glu403, and Arg460. Catalysis depends on residues His503 and Glu505.

It belongs to the CTP synthase family. As to quaternary structure, homotetramer.

It carries out the reaction UTP + L-glutamine + ATP + H2O = CTP + L-glutamate + ADP + phosphate + 2 H(+). The catalysed reaction is L-glutamine + H2O = L-glutamate + NH4(+). The enzyme catalyses UTP + NH4(+) + ATP = CTP + ADP + phosphate + 2 H(+). The protein operates within pyrimidine metabolism; CTP biosynthesis via de novo pathway; CTP from UDP: step 2/2. Its activity is regulated as follows. Allosterically activated by GTP, when glutamine is the substrate; GTP has no effect on the reaction when ammonia is the substrate. The allosteric effector GTP functions by stabilizing the protein conformation that binds the tetrahedral intermediate(s) formed during glutamine hydrolysis. Inhibited by the product CTP, via allosteric rather than competitive inhibition. Catalyzes the ATP-dependent amination of UTP to CTP with either L-glutamine or ammonia as the source of nitrogen. Regulates intracellular CTP levels through interactions with the four ribonucleotide triphosphates. The chain is CTP synthase from Methanococcoides burtonii (strain DSM 6242 / NBRC 107633 / OCM 468 / ACE-M).